We begin with the raw amino-acid sequence, 139 residues long: Large ribosomal subunit protein uL16 (139 aa).

Basic residues predominate over residues M1–M17. The segment at M1–H25 is disordered.

Belongs to the universal ribosomal protein uL16 family. As to quaternary structure, part of the 50S ribosomal subunit.

Binds 23S rRNA and is also seen to make contacts with the A and possibly P site tRNAs. In Christiangramia forsetii (strain DSM 17595 / CGMCC 1.15422 / KT0803) (Gramella forsetii), this protein is Large ribosomal subunit protein uL16.